Here is a 1518-residue protein sequence, read N- to C-terminus: MTLSRGPYSELDKMSLFQDLKLKRRKIDSRCSSDGESIADTSTSSPDLLAPMSPKLCDSGSAGASLGASLPLPLALPLPMALPLPMSLPLPLTAASSAVTVSLAAVVAAVAETGGAGAGGAGTAVTASGAGPCVSTSSTTAAAATSSTSSLSSSSSSSSSTSSSTSSASPTAGASSTATCPASSSSSSGNGSGGKSGSIKQEHTEIHSSSSAISAAAASTVMSPPPAEATRSSPATPEGGGPAGDGSGATGGGNTSGGSTAGVAINEHQNNGNGSGGSSRASPDSLEEKPSTTTTTGRPTLTPTNGVLSSASAGTGISTGSSAKLSEAGMSVIRSVKEERLLNVSSKMLVFHQQREQETKAVAAAAAAAAAGHVTVLVTPSRIKSEPPPPASPSSTSSTQRERERERDRERDRERERERDRDREREREQSISSSQQHLSRVSASPPTQLSHGSLGPNIVQTHHLHQQLTQPLTLRKSSPPTEHLLSQSMQHLTQQQAIHLHHLLGQQQQQQQASHPQQQQQQQHSPHSLVRVKKEPNVGQRHLSPHHQQQSPLLQHHQQQQQQQQQQQQHLHQQQQQQQHHQQQPQALALMHPASLALRNSNRDAAILFRVKSEVHQQVAAGLPHLMQSAGGAAAAAAAAVAAQRMVCFSNARINGVKPEVIGGPLGNLRPVGVGGGNGSGSVQCPSPHPSSSSSSSQLSPQTPSQTPPRGTPTVIMGESCGVRTMVWGYEPPPPSAGQSHGQHPQQQQQSPHHQPQQQQQQQQQQSQQQQQQQQQQSLGQQQHCLSSPSAGSLTPSSSSGGGSVSGGGVGGPLTPSSVAPQNNEEAAQLLLSLGQTRIQDMRSRPHPFRTPHALNMERLWAGDYSQLPPGQLQALNLSAQQQQWGSSNSTGLGGVGGGMGGRNLEAPHEPTDEDEQPLVCMICEDKATGLHYGIITCEGCKGFFKRTVQNRRVYTCVADGTCEITKAQRNRCQYCRFKKCIEQGMVLQAVREDRMPGGRNSGAVYNLYKVKYKKHKKTNQKQQQQAAQQQQQQAAAQQQHQQQQQHQQHQQHQQQQLHSPLHHHHHQGHQSHHAQQQHHPQLSPHHLLSPQQQQLAAAVAAAAQHQQQQQQQQQQQQQAKLMGGVVDMKPMFLGPALKPELLQAPPMHSPAQQQQQQQQQQQQQQASPHLSLSSPHQQQQQQQGQHQNHHQQQGGGGGGAGGGAQLPPHLVNGTILKTALTNPSEIVHLRHRLDSAVSSSKDRQISYEHALGMIQTLIDCDAMEDIATLPHFSEFLEDKSEISEKLCNIGDSIVHKLVSWTKKLPFYLEIPVEIHTKLLTDKWHEILILTTAAYQALHGKRRGEGGGSRHGSPASTPLSTPTGTPLSTPIPSPAQPLHKDDPEFVSEVNSHLSTLQTCLTTLMGQPIAMEQLKLDVGHMVDKMTQITIMFRRIKLKMEEYVCLKVYILLNKEVELESIQERYVQVLRSYLQNSSPQNPQARLSELLSHIPEIQAAASLLLESKMFYVPFVLNSASIR.

Disordered stretches follow at residues 30–50 (RCSSDGESIADTSTSSPDLLA), 145–327 (TSST…KLSE), 380–587 (PSRI…QPQA), 672–820 (VGVG…SSVA), and 887–913 (SSNSTGLGGVGGGMGGRNLEAPHEPTD). A compositionally biased stretch (polar residues) spans 34–46 (DGESIADTSTSSP). 2 stretches are compositionally biased toward low complexity: residues 145–189 (TSST…SSSG) and 208–219 (SSSSAISAAAAS). Residues 238-260 (EGGGPAGDGSGATGGGNTSGGST) are compositionally biased toward gly residues. Low complexity predominate over residues 291 to 323 (STTTTTGRPTLTPTNGVLSSASAGTGISTGSSA). The span at 400 to 429 (QRERERERDRERDRERERERDRDREREREQ) shows a compositional bias: basic and acidic residues. Composition is skewed to polar residues over residues 430–451 (SISSSQQHLSRVSASPPTQLSH) and 475–489 (RKSSPPTEHLLSQSM). Composition is skewed to low complexity over residues 490 to 529 (QHLTQQQAIHLHHLLGQQQQQQQASHPQQQQQQQHSPHSL), 546 to 586 (HHQQ…QQPQ), 681 to 705 (GSVQCPSPHPSSSSSSSQLSPQTPS), and 738 to 799 (GQSH…PSSS). Gly residues-rich tracts occupy residues 800–812 (SGGGSVSGGGVGG) and 892–902 (GLGGVGGGMGG). A DNA-binding region (nuclear receptor) is located at residues 918-993 (PLVCMICEDK…QGMVLQAVRE (76 aa)). NR C4-type zinc fingers lie at residues 921–941 (CMICEDKATGLHYGIITCEGC) and 957–976 (CVADGTCEITKAQRNRCQYC). Disordered stretches follow at residues 1015 to 1101 (KHKK…AAVA), 1142 to 1210 (LLQA…LPPH), and 1341 to 1371 (KRRGEGGGSRHGSPASTPLSTPTGTPLSTPI). Low complexity predominate over residues 1021–1060 (QKQQQQAAQQQQQQAAAQQQHQQQQQHQQHQQHQQQQLHS). Basic residues predominate over residues 1061 to 1077 (PLHHHHHQGHQSHHAQQ). Low complexity-rich tracts occupy residues 1078 to 1101 (QHHPQLSPHHLLSPQQQQLAAAVA) and 1144 to 1193 (QAPP…HHQQ). Residues 1194 to 1205 (QGGGGGGAGGGA) show a composition bias toward gly residues. One can recognise an NR LBD domain in the interval 1250–1518 (HALGMIQTLI…PFVLNSASIR (269 aa)). A compositionally biased stretch (low complexity) spans 1351–1368 (HGSPASTPLSTPTGTPLS).

The protein belongs to the nuclear hormone receptor family. NR1 subfamily. As to expression, during L2 and L3 stages, strong constitutive expression is seen in the ring gland. Lower expression is detected in specific neurons of the central nervous system (CNS) (at protein level).

Its subcellular location is the nucleus. Coordinates growth and maturation by mediating endocrine responses to the attainment of critical weight during larval development. Plays a central role in the genetic cascades triggered by the steroid hormone ecdysone at the onset of metamorphosis, acting as both a repressor of the early ecdysone-induced regulatory genes and an inducer of the ftz-f1 midprepupal competence factor. In Drosophila melanogaster (Fruit fly), this protein is Hormone receptor 4 (Hr4).